The chain runs to 328 residues: Putative gluconeogenesis factor (328 aa).

The protein belongs to the gluconeogenesis factor family.

It localises to the cytoplasm. Required for morphogenesis under gluconeogenic growth conditions. In Aquifex aeolicus (strain VF5), this protein is Putative gluconeogenesis factor.